A 517-amino-acid polypeptide reads, in one-letter code: Golgi-associated kinase 1B (517 aa).

Topologically, residues 1–36 (MTCPDKPGQLVNWFVCSLCAPRVCKLWSSRRPRTRR) are cytoplasmic. A helical; Signal-anchor for type II membrane protein transmembrane segment spans residues 37–56 (NLLLGTACAIYLGFLVSQVG). Over 57-517 (RGSFQHGQAT…HGARVLPMNE (461 aa)) the chain is Extracellular. N-linked (GlcNAc...) asparagine glycosylation is found at Asn98 and Asn287.

This sequence belongs to the GASK family.

It is found in the golgi apparatus membrane. This Mus musculus (Mouse) protein is Golgi-associated kinase 1B.